The primary structure comprises 754 residues: Zinc finger protein with KRAB and SCAN domains 7 (754 aa).

Residue lysine 28 forms a Glycyl lysine isopeptide (Lys-Gly) (interchain with G-Cter in SUMO2) linkage. The SCAN box domain occupies 54–136 (RLHFRQLCYH…AVVEDFQRHL (83 aa)). Positions 157–215 (TALGTTKESPPTSPLSGGSAPGAHLEPPYDPGTHHLPSGDFAQCTSPVPTLPQVGNSGD) are disordered. Composition is skewed to polar residues over residues 158 to 172 (ALGT…SPLS) and 199 to 215 (QCTS…NSGD). The KRAB domain occupies 231–306 (VAYEDLSVDY…TSGGLFGVVP (76 aa)). 10 consecutive C2H2-type zinc fingers follow at residues 383-405 (YRCD…QRIH), 411-433 (YECN…LRTH), 439-461 (YECS…QRLH), 467-489 (YKCN…QRTH), 495-517 (YECN…QVLH), 523-545 (YKCN…QRIH), 551-573 (YECS…QSLH), 579-601 (YKCS…ERIH), 607-629 (FECS…QRLH), and 635-657 (YKCN…QRIH). The C2H2-type 11; degenerate zinc-finger motif lies at 663-685 (YECNECGKVFSYSSSLMVHQRTH). 2 C2H2-type zinc fingers span residues 691 to 713 (YKCN…QRVH) and 719 to 741 (YECS…QRTH). Residues 735 to 754 (NHHQRTHTGEKSSGLAWSVS) form a disordered region.

Belongs to the krueppel C2H2-type zinc-finger protein family.

It is found in the nucleus. In terms of biological role, may be involved in transcriptional regulation. The polypeptide is Zinc finger protein with KRAB and SCAN domains 7 (ZKSCAN7) (Homo sapiens (Human)).